Consider the following 85-residue polypeptide: Putative RING finger protein 095L (85 aa).

The RING-type; degenerate zinc finger occupies 39 to 73 (CPIWYNYQVNTVFLPCAHVACYLCSKIIKNCHLCR).

The protein is Putative RING finger protein 095L of Invertebrate iridescent virus 6 (IIV-6).